A 68-amino-acid chain; its full sequence is Large ribosomal subunit protein bL33c (68 aa).

Belongs to the bacterial ribosomal protein bL33 family.

The protein localises to the plastid. This Cuscuta exaltata (Tall dodder) protein is Large ribosomal subunit protein bL33c.